Consider the following 536-residue polypeptide: Probable 1,4-beta-D-glucan cellobiohydrolase B (536 aa).

An N-terminal signal peptide occupies residues 1–21 (MSSFQVYRAALLLSILATANA). Positions 22 to 458 (QQVGTYTTET…SNIKFGPIGS (437 aa)) are catalytic. The active-site Nucleophile is the Glu-233. Catalysis depends on Glu-238, which acts as the Proton donor. Residues Asn-351 and Asn-414 are each glycosylated (N-linked (GlcNAc...) asparagine). The segment at 459–500 (TYSSGSSSGSGSSSSSSSTTTKATSTTLKTTSTTSSGSSSTS) is ser/Thr-rich linker. Residues 464-499 (SSSGSGSSSSSSSTTTKATSTTLKTTSTTSSGSSST) are disordered. One can recognise a CBM1 domain in the interval 500-536 (SAAQAYGQCGGQGWTGPTTCVSGYTCTYENAYYSQCL). 2 disulfides stabilise this stretch: Cys-508/Cys-525 and Cys-519/Cys-535.

The protein belongs to the glycosyl hydrolase 7 (cellulase C) family.

The protein resides in the secreted. It carries out the reaction Hydrolysis of (1-&gt;4)-beta-D-glucosidic linkages in cellulose and cellotetraose, releasing cellobiose from the non-reducing ends of the chains.. In terms of biological role, the biological conversion of cellulose to glucose generally requires three types of hydrolytic enzymes: (1) Endoglucanases which cut internal beta-1,4-glucosidic bonds; (2) Exocellobiohydrolases that cut the disaccharide cellobiose from the non-reducing end of the cellulose polymer chain; (3) Beta-1,4-glucosidases which hydrolyze the cellobiose and other short cello-oligosaccharides to glucose. In Aspergillus niger (strain ATCC MYA-4892 / CBS 513.88 / FGSC A1513), this protein is Probable 1,4-beta-D-glucan cellobiohydrolase B (cbhB).